A 1371-amino-acid chain; its full sequence is DNA-directed RNA polymerase subunit beta' (1371 aa).

Residues cysteine 71, cysteine 73, cysteine 86, and cysteine 89 each contribute to the Zn(2+) site. 3 residues coordinate Mg(2+): aspartate 461, aspartate 463, and aspartate 465. Cysteine 803, cysteine 877, cysteine 884, and cysteine 887 together coordinate Zn(2+).

It belongs to the RNA polymerase beta' chain family. The RNAP catalytic core consists of 2 alpha, 1 beta, 1 beta' and 1 omega subunit. When a sigma factor is associated with the core the holoenzyme is formed, which can initiate transcription. Mg(2+) is required as a cofactor. Zn(2+) serves as cofactor.

It carries out the reaction RNA(n) + a ribonucleoside 5'-triphosphate = RNA(n+1) + diphosphate. Functionally, DNA-dependent RNA polymerase catalyzes the transcription of DNA into RNA using the four ribonucleoside triphosphates as substrates. The protein is DNA-directed RNA polymerase subunit beta' of Thermodesulfovibrio yellowstonii (strain ATCC 51303 / DSM 11347 / YP87).